The sequence spans 217 residues: Non-structural protein NS3 (217 aa).

It belongs to the orbivirus NS3 family.

Functionally, may play a role in the release of virions from infected cells. This African horse sickness virus (AHSV) protein is Non-structural protein NS3 (Segment-10).